A 1390-amino-acid polypeptide reads, in one-letter code: DNA-directed RNA polymerase subunit beta (1390 aa).

This sequence belongs to the RNA polymerase beta chain family. As to quaternary structure, the RNAP catalytic core consists of 2 alpha, 1 beta, 1 beta' and 1 omega subunit. When a sigma factor is associated with the core the holoenzyme is formed, which can initiate transcription.

The enzyme catalyses RNA(n) + a ribonucleoside 5'-triphosphate = RNA(n+1) + diphosphate. Its function is as follows. DNA-dependent RNA polymerase catalyzes the transcription of DNA into RNA using the four ribonucleoside triphosphates as substrates. This Chromobacterium violaceum (strain ATCC 12472 / DSM 30191 / JCM 1249 / CCUG 213 / NBRC 12614 / NCIMB 9131 / NCTC 9757 / MK) protein is DNA-directed RNA polymerase subunit beta.